Reading from the N-terminus, the 117-residue chain is Iron-sulfur cluster insertion protein ErpA (117 aa).

Residues C45, C109, and C111 each contribute to the iron-sulfur cluster site.

The protein belongs to the HesB/IscA family. In terms of assembly, homodimer. The cofactor is iron-sulfur cluster.

Functionally, required for insertion of 4Fe-4S clusters for at least IspG. The polypeptide is Iron-sulfur cluster insertion protein ErpA (Chromohalobacter salexigens (strain ATCC BAA-138 / DSM 3043 / CIP 106854 / NCIMB 13768 / 1H11)).